A 105-amino-acid polypeptide reads, in one-letter code: Pyrimidine/purine nucleoside phosphorylase (105 aa).

The protein belongs to the nucleoside phosphorylase PpnP family.

It carries out the reaction a purine D-ribonucleoside + phosphate = a purine nucleobase + alpha-D-ribose 1-phosphate. The enzyme catalyses adenosine + phosphate = alpha-D-ribose 1-phosphate + adenine. The catalysed reaction is cytidine + phosphate = cytosine + alpha-D-ribose 1-phosphate. It catalyses the reaction guanosine + phosphate = alpha-D-ribose 1-phosphate + guanine. It carries out the reaction inosine + phosphate = alpha-D-ribose 1-phosphate + hypoxanthine. The enzyme catalyses thymidine + phosphate = 2-deoxy-alpha-D-ribose 1-phosphate + thymine. The catalysed reaction is uridine + phosphate = alpha-D-ribose 1-phosphate + uracil. It catalyses the reaction xanthosine + phosphate = alpha-D-ribose 1-phosphate + xanthine. Catalyzes the phosphorolysis of diverse nucleosides, yielding D-ribose 1-phosphate and the respective free bases. Can use uridine, adenosine, guanosine, cytidine, thymidine, inosine and xanthosine as substrates. Also catalyzes the reverse reactions. In Cupriavidus pinatubonensis (strain JMP 134 / LMG 1197) (Cupriavidus necator (strain JMP 134)), this protein is Pyrimidine/purine nucleoside phosphorylase.